The following is a 583-amino-acid chain: Putative ABC transporter ATP-binding protein exp8 (583 aa).

Residues 25 to 308 form the ABC transmembrane type-1 domain; that stretch reads TFLALSFLLA…VTQNFSTLQT (284 aa). 5 consecutive transmembrane segments (helical) span residues 26–46, 61–81, 135–155, 159–179, and 259–279; these read FLAL…PLVA, AVTV…VQYV, MFSG…TTLY, VLDF…FLLV, and LGYA…GITV. The ABC transporter domain maps to 341–574; it reads IRFEHVCFSY…GGTYHKMYSL (234 aa). 374–381 is a binding site for ATP; it reads GHTGSGKS.

It belongs to the ABC transporter superfamily.

It localises to the cell membrane. This is Putative ABC transporter ATP-binding protein exp8 (exp8) from Streptococcus pneumoniae serotype 4 (strain ATCC BAA-334 / TIGR4).